The sequence spans 40 residues: Potassium channel toxin alpha-KTx 12.2 (40 aa).

Intrachain disulfides connect cysteine 2/cysteine 5, cysteine 10/cysteine 31, cysteine 16/cysteine 36, and cysteine 20/cysteine 38.

This sequence belongs to the short scorpion toxin superfamily. Potassium channel inhibitor family. Alpha-KTx 12 subfamily. In terms of tissue distribution, expressed by the venom gland.

It localises to the secreted. Inhibits high conductance calcium-activated potassium channels. Reversibly inhibits Shaker B potassium channels. This Tityus trivittatus (Argentinean scorpion) protein is Potassium channel toxin alpha-KTx 12.2.